The following is a 274-amino-acid chain: ATP synthase subunit delta (274 aa).

The protein belongs to the ATPase delta chain family. As to quaternary structure, F-type ATPases have 2 components, F(1) - the catalytic core - and F(0) - the membrane proton channel. F(1) has five subunits: alpha(3), beta(3), gamma(1), delta(1), epsilon(1). F(0) has three main subunits: a(1), b(2) and c(10-14). The alpha and beta chains form an alternating ring which encloses part of the gamma chain. F(1) is attached to F(0) by a central stalk formed by the gamma and epsilon chains, while a peripheral stalk is formed by the delta and b chains.

Its subcellular location is the cell membrane. Functionally, f(1)F(0) ATP synthase produces ATP from ADP in the presence of a proton or sodium gradient. F-type ATPases consist of two structural domains, F(1) containing the extramembraneous catalytic core and F(0) containing the membrane proton channel, linked together by a central stalk and a peripheral stalk. During catalysis, ATP synthesis in the catalytic domain of F(1) is coupled via a rotary mechanism of the central stalk subunits to proton translocation. Its function is as follows. This protein is part of the stalk that links CF(0) to CF(1). It either transmits conformational changes from CF(0) to CF(1) or is implicated in proton conduction. This Salinispora arenicola (strain CNS-205) protein is ATP synthase subunit delta.